The following is a 210-amino-acid chain: Claudin-4 (210 aa).

The Cytoplasmic portion of the chain corresponds to 1–7 (MASMGLQ). An interaction with EPHA2 region spans residues 1-103 (MASMGLQVLG…GMLLSVVGGK (103 aa)). Residues 8–28 (VLGISLAVLGWLGIILSCALP) traverse the membrane as a helical segment. Over 29–81 (MWRVTAFIGSNIVTAQTSWEGLWMNCVVQSTGQMQCKMYDSMLALPQDLQAAR) the chain is Extracellular. Cysteine 54 and cysteine 64 are oxidised to a cystine. Residues 82–102 (ALMVISIIVGALGMLLSVVGG) form a helical membrane-spanning segment. The Cytoplasmic portion of the chain corresponds to 103-116 (KCTNCMEDETVKAK). A helical membrane pass occupies residues 117-137 (IMITAGAVFIVASMLIMVPVS). Residues 138 to 160 (WTAHNVIRDFYNPMVASGQKREM) lie on the Extracellular side of the membrane. The helical transmembrane segment at 161-181 (GASLYVGWAASGLLLLGGGLL) threads the bilayer. Residues 182–210 (CCSCPPRSNDKPYSAKYSAARSVPASNYV) are Cytoplasmic-facing. The residue at position 209 (tyrosine 209) is a Phosphotyrosine; by EPHA2. The interactions with TJP1, TJP2 and TJP3 stretch occupies residues 209–210 (YV).

The protein belongs to the claudin family. Can form heteropolymeric strands with other claudins. Interacts with CLDN8. Interacts with CLDN1. Directly interacts with TJP1/ZO-1, TJP2/ZO-2 and TJP3/ZO-3. Interacts with EPHA2; phosphorylates CLDN4 and may regulate tight junctions. Post-translationally, phosphorylated. Phosphorylation by EPHA2 is stimulated by EFNA1 and alters interaction with TJP1. In terms of tissue distribution, expressed primarily in lung and kidney. Present in both cortical and medullar collecting ducts (at protein level).

It is found in the cell junction. It localises to the tight junction. Its subcellular location is the cell membrane. The catalysed reaction is chloride(in) = chloride(out). It catalyses the reaction bromide(in) = bromide(out). The enzyme catalyses iodide(out) = iodide(in). It carries out the reaction fluoride(in) = fluoride(out). Can associate with other claudins to regulate tight junction structural and functional strand dynamics. May coassemble with CLDN8 into tight junction strands containing anion-selective channels that convey paracellular chloride permeability in renal collecting ducts. May integrate into CLDN3 strands to modulate localized tight junction barrier properties. May disrupt strand assembly of channel-forming CLDN2 and CLDN15 and inhibit cation conductance. Cannot form tight junction strands on its own. The chain is Claudin-4 from Mus musculus (Mouse).